Consider the following 228-residue polypeptide: Casparian strip membrane protein 2 (228 aa).

Over 1–65 (MSTSDAAATV…FRRADRGSRC (65 aa)) the chain is Cytoplasmic. The chain crosses the membrane as a helical span at residues 66 to 86 (VALLDLVLRVAAFGPALAAAI). Residues 87-113 (ATGTSDETLSVFTQFFQFHARFDDFPA) are Extracellular-facing. Residues 114 to 134 (LLFFMVANAIAAGYLVLSLPF) form a helical membrane-spanning segment. The Cytoplasmic segment spans residues 135–149 (SAVVVLRPQAIGLRH). Residues 150–170 (LLLICDLIIAALLTAAAAAAA) traverse the membrane as a helical segment. Topologically, residues 171-201 (AIVDLAHSGNQRANWVPICMQFHGFCQRTSG) are extracellular. Residues 202 to 222 (AVVASFLAVLVLLFLVILAAF) traverse the membrane as a helical segment. Residues 223–228 (TIRKRC) lie on the Cytoplasmic side of the membrane.

It belongs to the Casparian strip membrane proteins (CASP) family. Homodimer and heterodimers.

Its subcellular location is the cell membrane. Regulates membrane-cell wall junctions and localized cell wall deposition. Required for establishment of the Casparian strip membrane domain (CSD) and the subsequent formation of Casparian strips, a cell wall modification of the root endodermis that determines an apoplastic barrier between the intraorganismal apoplasm and the extraorganismal apoplasm and prevents lateral diffusion. The protein is Casparian strip membrane protein 2 of Zea mays (Maize).